Reading from the N-terminus, the 170-residue chain is Co-chaperone protein HscB homolog (170 aa).

The 75-residue stretch at 5 to 79 folds into the J domain; that stretch reads DHFSLFGLPT…RARYLCEQAG (75 aa).

The protein belongs to the HscB family. As to quaternary structure, interacts with HscA and stimulates its ATPase activity.

In terms of biological role, co-chaperone involved in the maturation of iron-sulfur cluster-containing proteins. Seems to help targeting proteins to be folded toward HscA. The sequence is that of Co-chaperone protein HscB homolog from Bordetella bronchiseptica (strain ATCC BAA-588 / NCTC 13252 / RB50) (Alcaligenes bronchisepticus).